We begin with the raw amino-acid sequence, 598 residues long: DNA (cytosine-5)-methyltransferase DRM2 (598 aa).

Disordered regions lie at residues methionine 1–alanine 49 and glutamate 114–aspartate 146. In terms of domain architecture, UBA 1 spans proline 42–tyrosine 91. Over residues glutamate 114–aspartate 128 the composition is skewed to acidic residues. Residues glutamate 150–serine 194 enclose the UBA 2 domain. The tract at residues glycine 227–proline 252 is disordered. An SAM-dependent MTase DRM-type domain is found at valine 272 to valine 598.

Belongs to the class I-like SAM-binding methyltransferase superfamily. DRM-methyltransferase family. In terms of assembly, interacts (via UBA domains) with EIF4A.

The protein resides in the nucleus. The catalysed reaction is a 2'-deoxycytidine in DNA + S-adenosyl-L-methionine = a 5-methyl-2'-deoxycytidine in DNA + S-adenosyl-L-homocysteine + H(+). Its function is as follows. Involved in de novo DNA methylation. Required for CpG and non-CpG methylation. Required for normal establishment and maintenance of RNA-directed DNA methylation (RdDM) mediated by small interfering RNAs (siRNAs). Regulates proper plant development in both vegetative and reproductive stages through DNA methylation. The sequence is that of DNA (cytosine-5)-methyltransferase DRM2 from Oryza sativa subsp. japonica (Rice).